The chain runs to 381 residues: Succinyl-diaminopimelate desuccinylase (381 aa).

His69 provides a ligand contact to Zn(2+). Asp71 is a catalytic residue. Asp103 contributes to the Zn(2+) binding site. Residue Glu137 is the Proton acceptor of the active site. The Zn(2+) site is built by Glu138, Glu166, and His355.

It belongs to the peptidase M20A family. DapE subfamily. In terms of assembly, homodimer. Zn(2+) is required as a cofactor. Co(2+) serves as cofactor.

It catalyses the reaction N-succinyl-(2S,6S)-2,6-diaminopimelate + H2O = (2S,6S)-2,6-diaminopimelate + succinate. It participates in amino-acid biosynthesis; L-lysine biosynthesis via DAP pathway; LL-2,6-diaminopimelate from (S)-tetrahydrodipicolinate (succinylase route): step 3/3. In terms of biological role, catalyzes the hydrolysis of N-succinyl-L,L-diaminopimelic acid (SDAP), forming succinate and LL-2,6-diaminopimelate (DAP), an intermediate involved in the bacterial biosynthesis of lysine and meso-diaminopimelic acid, an essential component of bacterial cell walls. The sequence is that of Succinyl-diaminopimelate desuccinylase from Rickettsia massiliae (strain Mtu5).